The following is a 1370-amino-acid chain: Insulin-like growth factor 1 receptor (1370 aa).

The first 30 residues, 1 to 30 (MKSGSGGGSPTSLWGLVFLSAALSLWPTSG), serve as a signal peptide directing secretion. Cys-33 and Cys-52 are joined by a disulfide. Asn-51, Asn-102, and Asn-135 each carry an N-linked (GlcNAc...) asparagine glycan. Cystine bridges form between Cys-150-Cys-178, Cys-182-Cys-205, Cys-192-Cys-211, Cys-215-Cys-224, Cys-219-Cys-230, Cys-231-Cys-239, Cys-235-Cys-248, Cys-251-Cys-260, Cys-264-Cys-276, Cys-282-Cys-303, Cys-307-Cys-321, Cys-324-Cys-328, and Cys-332-Cys-354. Asn-245 is a glycosylation site (N-linked (GlcNAc...) asparagine). Asn-314 is a glycosylation site (N-linked (GlcNAc...) asparagine). N-linked (GlcNAc...) asparagine glycosylation is found at Asn-418 and Asn-439. A disulfide bridge links Cys-456 with Cys-489. Fibronectin type-III domains follow at residues 490-610 (ESDV…TNAS) and 611-709 (VPSI…TEAE). Residues Asn-535, Asn-608, Asn-623, Asn-641, Asn-748, Asn-757, Asn-765, Asn-901, and Asn-914 are each glycosylated (N-linked (GlcNAc...) asparagine). At 742-936 (DVLQVANTTM…AKTTYENFMH (195 aa)) the chain is on the extracellular side. Residues 835 to 928 (IPGPVTWEPR…DPVFFYVPAK (94 aa)) form the Fibronectin type-III 3 domain. Residues 937–960 (LIIALPVAILLIVGGLVIMLYVFH) traverse the membrane as a helical segment. Residues 961-1370 (RKRNNSRLGN…ALPLPQSSTC (410 aa)) are Cytoplasmic-facing. Positions 978–981 (NPEY) match the IRS1- and SHC1-binding motif. Tyr-981 is subject to Phosphotyrosine. A Protein kinase domain is found at 1000-1275 (ITMNRELGQG…SIKDEMEPSF (276 aa)). ATP contacts are provided by residues 1006–1014 (LGQGSFGMV) and Lys-1034. The active-site Proton acceptor is Asp-1136. Phosphotyrosine; by autocatalysis occurs at positions 1162, 1166, and 1167. Glycyl lysine isopeptide (Lys-Gly) (interchain with G-Cter in ubiquitin) cross-links involve residues Lys-1169 and Lys-1172. Ser-1279 carries the post-translational modification Phosphoserine; by GSK3-beta. A Phosphoserine modification is found at Ser-1283. The tract at residues 1304–1370 (NMESVPLDPS…ALPLPQSSTC (67 aa)) is disordered. The span at 1305 to 1321 (MESVPLDPSASSASLPL) shows a compositional bias: low complexity. A compositionally biased stretch (basic and acidic residues) spans 1322-1331 (PERHSGHKAE).

It belongs to the protein kinase superfamily. Tyr protein kinase family. Insulin receptor subfamily. As to quaternary structure, tetramer of 2 alpha and 2 beta chains linked by disulfide bonds. The alpha chains contribute to the formation of the ligand-binding domain, while the beta chain carries the kinase domain. Interacts with PIK3R1 and with the PTB/PID domains of IRS1 and SHC1 in vitro when autophosphorylated on tyrosine residues. Forms a hybrid receptor with INSR, the hybrid is a tetramer consisting of 1 alpha chain and 1 beta chain of INSR and 1 alpha chain and 1 beta chain of IGF1R. Interacts with ARRB1 and ARRB2. Interacts with GRB10. Interacts with RACK1. Interacts with SOCS1, SOCS2 and SOCS3. Interacts with 14-3-3 proteins. Interacts with NMD2. Interacts with MAP3K5. Interacts with STAT3. Found in a ternary complex with IGF1 and ITGAV:ITGB3 or ITGA6:ITGB4. Interacts (nascent precursor form) with ZFAND2B. Autophosphorylated on tyrosine residues in response to ligand binding. Autophosphorylation occurs in trans, i.e. one subunit of the dimeric receptor phosphorylates tyrosine residues on the other subunit. Autophosphorylation occurs in a sequential manner; Tyr-1166 is predominantly phosphorylated first, followed by phosphorylation of Tyr-1162 and Tyr-1167. While every single phosphorylation increases kinase activity, all three tyrosine residues in the kinase activation loop (Tyr-1162, Tyr-1166 and Tyr-1167) have to be phosphorylated for optimal activity. Can be autophosphorylated at additional tyrosine residues (in vitro). Autophosphorylated is followed by phosphorylation of juxtamembrane tyrosines and C-terminal serines. May also be phosphorylated at Tyr-1162 and Tyr-1167 by mTORC2. Phosphorylation of Tyr-981 is required for IRS1- and SHC1-binding. Phosphorylation of Ser-1279 by GSK-3beta restrains kinase activity and promotes cell surface expression, it requires a priming phosphorylation at Ser-1283. Dephosphorylated by PTPN1. In terms of processing, polyubiquitinated at Lys-1169 and Lys-1172 through both 'Lys-48' and 'Lys-29' linkages, promoting receptor endocytosis and subsequent degradation by the proteasome. Ubiquitination is facilitated by pre-existing phosphorylation. Post-translationally, sumoylated with SUMO1. Controlled by regulated intramembrane proteolysis (RIP). Undergoes metalloprotease-dependent constitutive ectodomain shedding to produce a membrane-anchored 52 kDa C-Terminal fragment which is further processed by presenilin gamma-secretase to yield an intracellular 50 kDa fragment.

Its subcellular location is the cell membrane. The catalysed reaction is L-tyrosyl-[protein] + ATP = O-phospho-L-tyrosyl-[protein] + ADP + H(+). Its activity is regulated as follows. Activated by autophosphorylation at Tyr-1162, Tyr-1166 and Tyr-1167 on the kinase activation loop; phosphorylation at all three tyrosine residues is required for optimal kinase activity. Inhibited by MSC1609119A-1, BMS-754807, PQIP, benzimidazole pyridinone, isoquinolinedione, bis-azaindole, 3-cyanoquinoline, 2,4-bis-arylamino-1,3-pyrimidine, pyrrolopyrimidine, pyrrole-5-carboxaldehyde, picropodophyllin (PPP), tyrphostin derivatives. While most inhibitors bind to the ATP binding pocket, MSC1609119A-1 functions as allosteric inhibitor and binds close to the DFG motif and the activation loop. Dephosphorylated by PTPN1. In terms of biological role, receptor tyrosine kinase which mediates actions of insulin-like growth factor 1 (IGF1). Binds IGF1 with high affinity and IGF2 and insulin (INS) with a lower affinity. The activated IGF1R is involved in cell growth and survival control. IGF1R is crucial for tumor transformation and survival of malignant cell. Ligand binding activates the receptor kinase, leading to receptor autophosphorylation, and tyrosines phosphorylation of multiple substrates, that function as signaling adapter proteins including, the insulin-receptor substrates (IRS1/2), Shc and 14-3-3 proteins. Phosphorylation of IRSs proteins lead to the activation of two main signaling pathways: the PI3K-AKT/PKB pathway and the Ras-MAPK pathway. The result of activating the MAPK pathway is increased cellular proliferation, whereas activating the PI3K pathway inhibits apoptosis and stimulates protein synthesis. Phosphorylated IRS1 can activate the 85 kDa regulatory subunit of PI3K (PIK3R1), leading to activation of several downstream substrates, including protein AKT/PKB. AKT phosphorylation, in turn, enhances protein synthesis through mTOR activation and triggers the antiapoptotic effects of IGFIR through phosphorylation and inactivation of BAD. In parallel to PI3K-driven signaling, recruitment of Grb2/SOS by phosphorylated IRS1 or Shc leads to recruitment of Ras and activation of the ras-MAPK pathway. In addition to these two main signaling pathways IGF1R signals also through the Janus kinase/signal transducer and activator of transcription pathway (JAK/STAT). Phosphorylation of JAK proteins can lead to phosphorylation/activation of signal transducers and activators of transcription (STAT) proteins. In particular activation of STAT3, may be essential for the transforming activity of IGF1R. The JAK/STAT pathway activates gene transcription and may be responsible for the transforming activity. JNK kinases can also be activated by the IGF1R. IGF1 exerts inhibiting activities on JNK activation via phosphorylation and inhibition of MAP3K5/ASK1, which is able to directly associate with the IGF1R. When present in a hybrid receptor with INSR, binds IGF1. The chain is Insulin-like growth factor 1 receptor (Igf1r) from Rattus norvegicus (Rat).